The sequence spans 572 residues: Sulfite reductase [NADPH] hemoprotein beta-component (572 aa).

[4Fe-4S] cluster contacts are provided by cysteine 436, cysteine 442, cysteine 481, and cysteine 485. Siroheme is bound at residue cysteine 485.

This sequence belongs to the nitrite and sulfite reductase 4Fe-4S domain family. In terms of assembly, alpha(8)-beta(8). The alpha component is a flavoprotein, the beta component is a hemoprotein. It depends on siroheme as a cofactor. Requires [4Fe-4S] cluster as cofactor.

It catalyses the reaction hydrogen sulfide + 3 NADP(+) + 3 H2O = sulfite + 3 NADPH + 4 H(+). It participates in sulfur metabolism; hydrogen sulfide biosynthesis; hydrogen sulfide from sulfite (NADPH route): step 1/1. Its function is as follows. Component of the sulfite reductase complex that catalyzes the 6-electron reduction of sulfite to sulfide. This is one of several activities required for the biosynthesis of L-cysteine from sulfate. The chain is Sulfite reductase [NADPH] hemoprotein beta-component from Bacillus pumilus (strain SAFR-032).